The following is an 86-amino-acid chain: Small ribosomal subunit protein bS20 (86 aa).

Belongs to the bacterial ribosomal protein bS20 family.

In terms of biological role, binds directly to 16S ribosomal RNA. In Novosphingobium aromaticivorans (strain ATCC 700278 / DSM 12444 / CCUG 56034 / CIP 105152 / NBRC 16084 / F199), this protein is Small ribosomal subunit protein bS20.